The primary structure comprises 326 residues: Tryptophan--tRNA ligase (326 aa).

Residues Q11–T13 and G19–N20 each bind ATP. The 'HIGH' region signature appears at P12 to N20. An L-tryptophan-binding site is contributed by D135. Residues G147–D149, V186, and K195–S199 contribute to the ATP site. Positions K195–S199 match the 'KMSKS' region motif.

This sequence belongs to the class-I aminoacyl-tRNA synthetase family. In terms of assembly, homodimer.

Its subcellular location is the cytoplasm. It carries out the reaction tRNA(Trp) + L-tryptophan + ATP = L-tryptophyl-tRNA(Trp) + AMP + diphosphate + H(+). In terms of biological role, catalyzes the attachment of tryptophan to tRNA(Trp). The polypeptide is Tryptophan--tRNA ligase (Helicobacter pylori (strain J99 / ATCC 700824) (Campylobacter pylori J99)).